The following is a 193-amino-acid chain: Fe/S biogenesis protein NfuA (193 aa).

[4Fe-4S] cluster contacts are provided by C151 and C154.

It belongs to the NfuA family. Homodimer. The cofactor is [4Fe-4S] cluster.

Functionally, involved in iron-sulfur cluster biogenesis. Binds a 4Fe-4S cluster, can transfer this cluster to apoproteins, and thereby intervenes in the maturation of Fe/S proteins. Could also act as a scaffold/chaperone for damaged Fe/S proteins. The polypeptide is Fe/S biogenesis protein NfuA (Buchnera aphidicola subsp. Cinara cedri (strain Cc)).